The primary structure comprises 156 residues: Small ribosomal subunit protein uS7 (156 aa).

This sequence belongs to the universal ribosomal protein uS7 family. In terms of assembly, part of the 30S ribosomal subunit. Contacts proteins S9 and S11.

One of the primary rRNA binding proteins, it binds directly to 16S rRNA where it nucleates assembly of the head domain of the 30S subunit. Is located at the subunit interface close to the decoding center, probably blocks exit of the E-site tRNA. This is Small ribosomal subunit protein uS7 from Synechococcus sp. (strain JA-2-3B'a(2-13)) (Cyanobacteria bacterium Yellowstone B-Prime).